The chain runs to 337 residues: LIX1-like protein (337 aa).

The tract at residues 1-64 (METMRAQRLQ…PLLLSGAPGL (64 aa)) is disordered. Positions 26–38 (PGVTGAAAATATP) are enriched in low complexity. Over residues 39 to 56 (PAGPPPAPPPPAPPPPPL) the composition is skewed to pro residues.

The protein belongs to the LIX1 family.

The polypeptide is LIX1-like protein (LIX1L) (Homo sapiens (Human)).